Reading from the N-terminus, the 380-residue chain is Cobalt-precorrin-5B C(1)-methyltransferase (380 aa).

The protein belongs to the CbiD family.

The enzyme catalyses Co-precorrin-5B + S-adenosyl-L-methionine = Co-precorrin-6A + S-adenosyl-L-homocysteine. It participates in cofactor biosynthesis; adenosylcobalamin biosynthesis; cob(II)yrinate a,c-diamide from sirohydrochlorin (anaerobic route): step 6/10. Catalyzes the methylation of C-1 in cobalt-precorrin-5B to form cobalt-precorrin-6A. This is Cobalt-precorrin-5B C(1)-methyltransferase from Salinispora arenicola (strain CNS-205).